The chain runs to 806 residues: Phenylalanine--tRNA ligase beta subunit (806 aa).

The tRNA-binding domain maps to 44–158 (ADGLSKLVVG…EEAVPGDAIF (115 aa)). Residues 411 to 486 (TEPVEVSTSL…RIYGYDKLPT (76 aa)) enclose the B5 domain. Residues Asp464, Asp470, Glu473, and Glu474 each contribute to the Mg(2+) site. The 94-residue stretch at 713-806 (TKFPAMTRDV…LTEQVGAEVR (94 aa)) folds into the FDX-ACB domain.

This sequence belongs to the phenylalanyl-tRNA synthetase beta subunit family. Type 1 subfamily. Tetramer of two alpha and two beta subunits. Mg(2+) serves as cofactor.

The protein resides in the cytoplasm. The catalysed reaction is tRNA(Phe) + L-phenylalanine + ATP = L-phenylalanyl-tRNA(Phe) + AMP + diphosphate + H(+). In Streptococcus pyogenes serotype M28 (strain MGAS6180), this protein is Phenylalanine--tRNA ligase beta subunit.